A 140-amino-acid chain; its full sequence is Large ribosomal subunit protein uL11 (140 aa).

It belongs to the universal ribosomal protein uL11 family. In terms of assembly, part of the ribosomal stalk of the 50S ribosomal subunit. Interacts with L10 and the large rRNA to form the base of the stalk. L10 forms an elongated spine to which L12 dimers bind in a sequential fashion forming a multimeric L10(L12)X complex. In terms of processing, one or more lysine residues are methylated.

Functionally, forms part of the ribosomal stalk which helps the ribosome interact with GTP-bound translation factors. This is Large ribosomal subunit protein uL11 from Dehalococcoides mccartyi (strain ATCC BAA-2266 / KCTC 15142 / 195) (Dehalococcoides ethenogenes (strain 195)).